The chain runs to 76 residues: Small ribosomal subunit protein bS18 (76 aa).

Belongs to the bacterial ribosomal protein bS18 family. In terms of assembly, part of the 30S ribosomal subunit. Forms a tight heterodimer with protein bS6.

Binds as a heterodimer with protein bS6 to the central domain of the 16S rRNA, where it helps stabilize the platform of the 30S subunit. The protein is Small ribosomal subunit protein bS18 of Stutzerimonas stutzeri (strain A1501) (Pseudomonas stutzeri).